A 204-amino-acid polypeptide reads, in one-letter code: Small ribosomal subunit protein uS4 (204 aa).

Positions 22-43 (SGKELARRPYAPGDHGNTGRRP) are disordered. The S4 RNA-binding domain occupies 94-154 (TRLDSVVFRL…ERSKKIVPIL (61 aa)).

This sequence belongs to the universal ribosomal protein uS4 family. In terms of assembly, part of the 30S ribosomal subunit. Contacts protein S5. The interaction surface between S4 and S5 is involved in control of translational fidelity.

In terms of biological role, one of the primary rRNA binding proteins, it binds directly to 16S rRNA where it nucleates assembly of the body of the 30S subunit. Its function is as follows. With S5 and S12 plays an important role in translational accuracy. This chain is Small ribosomal subunit protein uS4, found in Oenococcus oeni (strain ATCC BAA-331 / PSU-1).